Here is a 261-residue protein sequence, read N- to C-terminus: Kallikrein 1-related peptidase b26 (261 aa).

An N-terminal signal peptide occupies residues 1–18 (MWFLILFPALSLGGIDAA). The propeptide at 19 to 24 (PPLQSR) is activation peptide. A Peptidase S1 domain is found at 25–258 (VVGGFNCEKN…FNSWIKDTMM (234 aa)). Intrachain disulfides connect Cys-31–Cys-173, Cys-50–Cys-66, Cys-152–Cys-219, Cys-184–Cys-198, and Cys-209–Cys-234. The Charge relay system role is filled by His-65. N-linked (GlcNAc...) asparagine glycosylation is present at Asn-102. The Charge relay system role is filled by Asp-120. Ser-213 (charge relay system) is an active-site residue.

This sequence belongs to the peptidase S1 family. Kallikrein subfamily.

The catalysed reaction is Preferential cleavage of Arg-|-Xaa bonds in small molecule substrates. Highly selective action to release kallidin (lysyl-bradykinin) from kininogen involves hydrolysis of Met-|-Xaa or Leu-|-Xaa.. Glandular kallikreins cleave Met-Lys and Arg-Ser bonds in kininogen to release Lys-bradykinin. In terms of biological role, prorenin-converting enzyme cleaves mouse REN-2 prorenin at a dibasic site to yield mature renin. The chain is Kallikrein 1-related peptidase b26 (Klk1b26) from Mus musculus (Mouse).